Reading from the N-terminus, the 194-residue chain is Putative manganese efflux pump MntP (194 aa).

Helical transmembrane passes span 6-26 (LILV…GLAL), 35-55 (WLFA…GLYL), 66-86 (VAAI…LWEA), 109-129 (GVLG…LDAL), 142-162 (VPLT…LGLL), and 174-194 (RAEL…LVGV).

The protein belongs to the MntP (TC 9.B.29) family.

It is found in the cell membrane. Probably functions as a manganese efflux pump. The sequence is that of Putative manganese efflux pump MntP from Moorella thermoacetica (strain ATCC 39073 / JCM 9320).